The following is a 45-amino-acid chain: Large ribosomal subunit protein bL36 (45 aa).

The interval 26-45 (VINKKDPNRKQRQKGPARKK) is disordered. Residues 35-45 (KQRQKGPARKK) are compositionally biased toward basic residues.

It belongs to the bacterial ribosomal protein bL36 family.

The sequence is that of Large ribosomal subunit protein bL36 from Protochlamydia amoebophila (strain UWE25).